A 130-amino-acid polypeptide reads, in one-letter code: Small ribosomal subunit protein uS9 (130 aa).

Belongs to the universal ribosomal protein uS9 family.

In Haemophilus influenzae (strain ATCC 51907 / DSM 11121 / KW20 / Rd), this protein is Small ribosomal subunit protein uS9 (rpsI).